A 256-amino-acid chain; its full sequence is uncharacterized protein (256 aa).

Disordered regions lie at residues 1–38 (MGKT…PNRD) and 51–75 (PRPS…RCPQ).

This is an uncharacterized protein from Homo sapiens (Human).